We begin with the raw amino-acid sequence, 156 residues long: Ribosome maturation factor RimP (156 aa).

This sequence belongs to the RimP family.

It localises to the cytoplasm. Required for maturation of 30S ribosomal subunits. The sequence is that of Ribosome maturation factor RimP from Gloeobacter violaceus (strain ATCC 29082 / PCC 7421).